Consider the following 310-residue polypeptide: D-alanine--D-alanine ligase (310 aa).

Residues 104-305 form the ATP-grasp domain; sequence KRLFHSEGLP…MPQLAERILQ (202 aa). 135–190 contributes to the ATP binding site; sequence LGDFHGAAFVKPLDSGSSVGISRAVGKDELIRGVAKALSVSHRCMVERAIEGRELT. 3 residues coordinate Mg(2+): aspartate 259, glutamate 272, and asparagine 274.

This sequence belongs to the D-alanine--D-alanine ligase family. Mg(2+) serves as cofactor. It depends on Mn(2+) as a cofactor.

It is found in the cytoplasm. It carries out the reaction 2 D-alanine + ATP = D-alanyl-D-alanine + ADP + phosphate + H(+). It functions in the pathway cell wall biogenesis; peptidoglycan biosynthesis. Cell wall formation. The protein is D-alanine--D-alanine ligase of Magnetococcus marinus (strain ATCC BAA-1437 / JCM 17883 / MC-1).